A 275-amino-acid polypeptide reads, in one-letter code: Dermonecrotic toxin LarSicTox-alphaIII1 (275 aa).

Residue H5 is part of the active site. The Mg(2+) site is built by E25 and D27. Catalysis depends on H41, which acts as the Nucleophile. Intrachain disulfides connect C45/C51 and C47/C190. D85 lines the Mg(2+) pocket. N252 is a glycosylation site (N-linked (GlcNAc...) asparagine).

It belongs to the arthropod phospholipase D family. Class II subfamily. Mg(2+) is required as a cofactor. As to expression, expressed by the venom gland.

It localises to the secreted. It catalyses the reaction an N-(acyl)-sphingosylphosphocholine = an N-(acyl)-sphingosyl-1,3-cyclic phosphate + choline. The enzyme catalyses an N-(acyl)-sphingosylphosphoethanolamine = an N-(acyl)-sphingosyl-1,3-cyclic phosphate + ethanolamine. The catalysed reaction is a 1-acyl-sn-glycero-3-phosphocholine = a 1-acyl-sn-glycero-2,3-cyclic phosphate + choline. It carries out the reaction a 1-acyl-sn-glycero-3-phosphoethanolamine = a 1-acyl-sn-glycero-2,3-cyclic phosphate + ethanolamine. Its function is as follows. Dermonecrotic toxins cleave the phosphodiester linkage between the phosphate and headgroup of certain phospholipids (sphingolipid and lysolipid substrates), forming an alcohol (often choline) and a cyclic phosphate. This toxin acts on sphingomyelin (SM). It may also act on ceramide phosphoethanolamine (CPE), lysophosphatidylcholine (LPC) and lysophosphatidylethanolamine (LPE), but not on lysophosphatidylserine (LPS), and lysophosphatidylglycerol (LPG). It acts by transphosphatidylation, releasing exclusively cyclic phosphate products as second products. Induces dermonecrosis, hemolysis, increased vascular permeability, edema, inflammatory response, and platelet aggregation. This chain is Dermonecrotic toxin LarSicTox-alphaIII1, found in Loxosceles arizonica (Arizona brown spider).